We begin with the raw amino-acid sequence, 320 residues long: MILVYNRIRSIISSSLGRIHVRYNSNSQNRWLNRQLKDPYTKEAKVQNLRSRAAFKLMQIDDKYRLFSKNRTDQRILDLGYAPGAWSQVARQRSSPNSMILGVDILPCEPPHGVNSIQANILAKRTHDLIRLFFSKHFQLNRHDDLHKDHGYFQNMLEEELTHVKDTELYREIFTSDDIYETPNTNSTLIEREKFPVDVIISDMYEPWPQTTGFWNNITNQAYFRMANTSGVSIRDHYQSIDLCDAALVTAIDLLRPLGSFVCKLYTGEEENLFKKRMQAVFTNVHKFKPDASRDESKETYYIGLKKKRNVDKLDVFSNS.

The N-terminal 18 residues, 1–18 (MILVYNRIRSIISSSLGR), are a transit peptide targeting the mitochondrion. Residues 83–86 (PGAW), D104, 178–179 (DI), and D203 each bind S-adenosyl-L-methionine. The active-site Proton acceptor is K264.

This sequence belongs to the class I-like SAM-binding methyltransferase superfamily. RNA methyltransferase RlmE family.

The protein localises to the mitochondrion. The enzyme catalyses uridine(2791) in 21S rRNA + S-adenosyl-L-methionine = 2'-O-methyluridine(2791) in 21S rRNA + S-adenosyl-L-homocysteine + H(+). S-adenosyl-L-methionine-dependent 2'-O-ribose methyltransferase that catalyzes the formation of 2'-O-methyluridine at position 2791 (Um2791) in the 21S mitochondrial large subunit ribosomal RNA (mtLSU rRNA), a universally conserved modification in the peptidyl transferase domain of the mtLSU rRNA. The polypeptide is rRNA methyltransferase 2, mitochondrial (Saccharomyces cerevisiae (strain ATCC 204508 / S288c) (Baker's yeast)).